The following is a 436-amino-acid chain: Trigger factor (436 aa).

One can recognise a PPIase FKBP-type domain in the interval 161 to 246; sequence DDRVTVDFVG…VNKVEGLSLP (86 aa).

Belongs to the FKBP-type PPIase family. Tig subfamily.

It localises to the cytoplasm. The enzyme catalyses [protein]-peptidylproline (omega=180) = [protein]-peptidylproline (omega=0). Its function is as follows. Involved in protein export. Acts as a chaperone by maintaining the newly synthesized protein in an open conformation. Functions as a peptidyl-prolyl cis-trans isomerase. This chain is Trigger factor, found in Pseudoalteromonas atlantica (strain T6c / ATCC BAA-1087).